A 102-amino-acid polypeptide reads, in one-letter code: Large ribosomal subunit protein bL21 (102 aa).

The protein belongs to the bacterial ribosomal protein bL21 family. In terms of assembly, part of the 50S ribosomal subunit. Contacts protein L20.

This protein binds to 23S rRNA in the presence of protein L20. This chain is Large ribosomal subunit protein bL21, found in Oceanobacillus iheyensis (strain DSM 14371 / CIP 107618 / JCM 11309 / KCTC 3954 / HTE831).